The primary structure comprises 232 residues: MAKISKRVAKGREGIDRNRFYPLDEAVKVIKERATAKFDETIEVAMNLGVDPRHADQMVRGVVNLPNGTGRSVRVAVFAKGDKADEAKAAGADIVGAEDLVETVQKGEINFDRCIATPDMMPLVGRLGKVLGPRGLMPNPKVGTVTTDVAAAVKASKGGAVEFRVEKAGIVHAGVGKVSFDENAIAENVRAFADAVIKAKPSGAKGNYLKRVSITSTMGPGLKIDPSTLAAS.

It belongs to the universal ribosomal protein uL1 family. Part of the 50S ribosomal subunit.

Binds directly to 23S rRNA. The L1 stalk is quite mobile in the ribosome, and is involved in E site tRNA release. Its function is as follows. Protein L1 is also a translational repressor protein, it controls the translation of the L11 operon by binding to its mRNA. In Chelativorans sp. (strain BNC1), this protein is Large ribosomal subunit protein uL1.